Here is a 72-residue protein sequence, read N- to C-terminus: Putative snRNP Sm-like protein (72 aa).

The Sm domain occupies Arg4–Pro72.

This sequence belongs to the snRNP Sm proteins family.

This is Putative snRNP Sm-like protein from Methanosarcina acetivorans (strain ATCC 35395 / DSM 2834 / JCM 12185 / C2A).